The primary structure comprises 291 residues: Homoserine kinase (291 aa).

80 to 90 (PLARGLGSSST) is an ATP binding site.

It belongs to the GHMP kinase family. Homoserine kinase subfamily.

The protein localises to the cytoplasm. It catalyses the reaction L-homoserine + ATP = O-phospho-L-homoserine + ADP + H(+). It functions in the pathway amino-acid biosynthesis; L-threonine biosynthesis; L-threonine from L-aspartate: step 4/5. In terms of biological role, catalyzes the ATP-dependent phosphorylation of L-homoserine to L-homoserine phosphate. The sequence is that of Homoserine kinase from Lactiplantibacillus plantarum (strain ATCC BAA-793 / NCIMB 8826 / WCFS1) (Lactobacillus plantarum).